We begin with the raw amino-acid sequence, 341 residues long: Anthranilate phosphoribosyltransferase (341 aa).

5-phospho-alpha-D-ribose 1-diphosphate contacts are provided by residues G79, 82 to 83 (GD), T87, 89 to 92 (NIST), 107 to 115 (KHGNRAVSS), and S119. Residue G79 coordinates anthranilate. Residue S91 coordinates Mg(2+). N110 contacts anthranilate. Residue R165 coordinates anthranilate. Mg(2+) is bound by residues D224 and E225.

It belongs to the anthranilate phosphoribosyltransferase family. As to quaternary structure, homodimer. It depends on Mg(2+) as a cofactor.

The catalysed reaction is N-(5-phospho-beta-D-ribosyl)anthranilate + diphosphate = 5-phospho-alpha-D-ribose 1-diphosphate + anthranilate. It functions in the pathway amino-acid biosynthesis; L-tryptophan biosynthesis; L-tryptophan from chorismate: step 2/5. Functionally, catalyzes the transfer of the phosphoribosyl group of 5-phosphorylribose-1-pyrophosphate (PRPP) to anthranilate to yield N-(5'-phosphoribosyl)-anthranilate (PRA). The chain is Anthranilate phosphoribosyltransferase from Bacillus mycoides (strain KBAB4) (Bacillus weihenstephanensis).